The primary structure comprises 693 residues: Elongation factor G (693 aa).

The tr-type G domain maps to 8–282 (EKTRNIGIMA…AVIDYLPSPL (275 aa)). GTP contacts are provided by residues 17–24 (AHVDAGKT), 81–85 (DTPGH), and 135–138 (NKMD).

The protein belongs to the TRAFAC class translation factor GTPase superfamily. Classic translation factor GTPase family. EF-G/EF-2 subfamily.

Its subcellular location is the cytoplasm. In terms of biological role, catalyzes the GTP-dependent ribosomal translocation step during translation elongation. During this step, the ribosome changes from the pre-translocational (PRE) to the post-translocational (POST) state as the newly formed A-site-bound peptidyl-tRNA and P-site-bound deacylated tRNA move to the P and E sites, respectively. Catalyzes the coordinated movement of the two tRNA molecules, the mRNA and conformational changes in the ribosome. This Streptococcus pneumoniae (strain Hungary19A-6) protein is Elongation factor G.